The chain runs to 83 residues: Large ribosomal subunit protein bL31B (83 aa).

It belongs to the bacterial ribosomal protein bL31 family. Type B subfamily. In terms of assembly, part of the 50S ribosomal subunit.

This chain is Large ribosomal subunit protein bL31B, found in Lactobacillus johnsonii (strain CNCM I-12250 / La1 / NCC 533).